A 161-amino-acid chain; its full sequence is MSDEEHQFESKADAGASKTYPQQAGTIRKNGYIVIKNRPCKVVEVSTSKTGKHGHAKCHFVAIDIFTSKKLEEVYVPSSHNCDVPHVNRTDYQLIDISEDGFVSLLTENGNTKDDLKLPTDDSLLTQIKDGFAEGKDLVVSVMSAMGEEQICALKDIGGKN.

The span at 1–12 shows a compositional bias: basic and acidic residues; that stretch reads MSDEEHQFESKA. Positions 1–21 are disordered; sequence MSDEEHQFESKADAGASKTYP. Lys-52 carries the post-translational modification Hypusine.

The protein belongs to the eIF-5A family. Post-translationally, lys-52 undergoes hypusination, a unique post-translational modification that consists in the addition of a butylamino group from spermidine to lysine side chain, leading to the formation of the unusual amino acid hypusine. eIF-5As are the only known proteins to undergo this modification, which is essential for their function.

Translation factor that promotes translation elongation and termination, particularly upon ribosome stalling at specific amino acid sequence contexts. Binds between the exit (E) and peptidyl (P) site of the ribosome and promotes rescue of stalled ribosome: specifically required for efficient translation of polyproline-containing peptides as well as other motifs that stall the ribosome. Acts as a ribosome quality control (RQC) cofactor by joining the RQC complex to facilitate peptidyl transfer during CAT tailing step. In Medicago sativa (Alfalfa), this protein is Eukaryotic translation initiation factor 5A-1.